The sequence spans 501 residues: Trans-cinnamate 4-monooxygenase (501 aa).

A helical transmembrane segment spans residues 3–23 (LVLLEKALLGLFAAAVLAVAV). (E)-cinnamate-binding positions include 213–218 (RSRLSQ) and alanine 302. Cysteine 443 contributes to the heme binding site.

The protein belongs to the cytochrome P450 family. It depends on heme as a cofactor.

The protein resides in the membrane. It carries out the reaction (E)-cinnamate + reduced [NADPH--hemoprotein reductase] + O2 = (E)-4-coumarate + oxidized [NADPH--hemoprotein reductase] + H2O + H(+). It functions in the pathway phenylpropanoid metabolism; trans-4-coumarate biosynthesis; trans-4-coumarate from trans-cinnamate: step 1/1. Functionally, catalyzes the first oxidative step of the phenylpropanoid pathway in higher plants by transforming trans-cinnamate into p-coumarate. The compounds formed by this pathway are essential components for lignification, pollination, and defense against ultraviolet light, predators and pathogens. Can also use 2-naphthoic acid as substrate. The chain is Trans-cinnamate 4-monooxygenase from Sorghum bicolor (Sorghum).